Reading from the N-terminus, the 151-residue chain is Arginine repressor (151 aa).

Belongs to the ArgR family.

The protein resides in the cytoplasm. It functions in the pathway amino-acid biosynthesis; L-arginine biosynthesis [regulation]. Functionally, regulates arginine biosynthesis genes. In Heliobacterium modesticaldum (strain ATCC 51547 / Ice1), this protein is Arginine repressor.